A 681-amino-acid chain; its full sequence is PTS system glucose-specific EIICBA component (681 aa).

Residues 3–414 (KKLFGQLQRI…LKYKTPGRED (412 aa)) form the PTS EIIC type-1 domain. 10 helical membrane-spanning segments follow: residues 16 to 36 (LMLPVAILPAAGLLLAIGTAM), 73 to 93 (MIFALGVAIGLAGGDGVAAIA), 126 to 146 (ILGIPTLQTGVFGGIIIGALA), 170 to 190 (FVPIMMATTSFILAFPMALIW), 199 to 219 (AFSTGLLDSNTGVAVFLFGFI), 273 to 293 (FMQGEFPVMMFGLPAAALAIY), 303 to 323 (VVAGLMGSAALTSFLTGITEP), 328 to 348 (FLFVAPLLFFIHAVLDGLSFL), 355 to 375 (LHLGYTFSGGFIDYFLLGILP), and 383 to 403 (VIPVGLVYAVIYYFVFRFLIV). Positions 425–506 (TELPYAVLEA…QQIMNGQVVE (82 aa)) constitute a PTS EIIB type-1 domain. Catalysis depends on Cys-447, which acts as the Phosphocysteine intermediate; for EIIB activity. One can recognise a PTS EIIA type-1 domain in the interval 551 to 655 (DQVFSEKMMG…SDITPIIVTQ (105 aa)). Residue His-603 is the Tele-phosphohistidine intermediate; for EIIA activity of the active site.

It is found in the cell membrane. It catalyses the reaction N(pros)-phospho-L-histidyl-[protein] + D-glucose(out) = D-glucose 6-phosphate(in) + L-histidyl-[protein]. Functionally, the phosphoenolpyruvate-dependent sugar phosphotransferase system (sugar PTS), a major carbohydrate active transport system, catalyzes the phosphorylation of incoming sugar substrates concomitantly with their translocation across the cell membrane. This system is involved in glucose transport. The protein is PTS system glucose-specific EIICBA component (ptsG) of Staphylococcus aureus (strain MRSA252).